Consider the following 209-residue polypeptide: High frequency lysogenization protein HflD homolog (209 aa).

The stretch at 79–121 forms a coiled coil; the sequence is QGLNAELTRYTLSLMVLERKLNSAKGAMDTLGDRIAGLQRQLD.

This sequence belongs to the HflD family.

It is found in the cytoplasm. The protein resides in the cell inner membrane. This chain is High frequency lysogenization protein HflD homolog, found in Enterobacter sp. (strain 638).